The chain runs to 500 residues: Histidine ammonia-lyase (500 aa).

Residues 142–144 (ASG) constitute a cross-link (5-imidazolinone (Ala-Gly)). 2,3-didehydroalanine (Ser) is present on Ser143.

This sequence belongs to the PAL/histidase family. In terms of processing, contains an active site 4-methylidene-imidazol-5-one (MIO), which is formed autocatalytically by cyclization and dehydration of residues Ala-Ser-Gly.

It localises to the cytoplasm. The enzyme catalyses L-histidine = trans-urocanate + NH4(+). The protein operates within amino-acid degradation; L-histidine degradation into L-glutamate; N-formimidoyl-L-glutamate from L-histidine: step 1/3. This chain is Histidine ammonia-lyase, found in Macrococcus caseolyticus (strain JCSC5402) (Macrococcoides caseolyticum).